We begin with the raw amino-acid sequence, 383 residues long: Homoserine O-acetyltransferase (383 aa).

Positions 52–362 constitute an AB hydrolase-1 domain; it reads NAILVCHALT…PWGHDAFLLD (311 aa). Serine 158 (nucleophile) is an active-site residue. Arginine 227 contributes to the substrate binding site. Residues aspartate 323 and histidine 356 contribute to the active site. Aspartate 357 is a binding site for substrate.

Belongs to the AB hydrolase superfamily. MetX family. In terms of assembly, homodimer.

It is found in the cytoplasm. It catalyses the reaction L-homoserine + acetyl-CoA = O-acetyl-L-homoserine + CoA. It participates in amino-acid biosynthesis; L-methionine biosynthesis via de novo pathway; O-acetyl-L-homoserine from L-homoserine: step 1/1. Transfers an acetyl group from acetyl-CoA to L-homoserine, forming acetyl-L-homoserine. The polypeptide is Homoserine O-acetyltransferase (Symbiobacterium thermophilum (strain DSM 24528 / JCM 14929 / IAM 14863 / T)).